A 466-amino-acid chain; its full sequence is 3-isopropylmalate dehydratase large subunit (466 aa).

[4Fe-4S] cluster contacts are provided by cysteine 347, cysteine 407, and cysteine 410.

The protein belongs to the aconitase/IPM isomerase family. LeuC type 1 subfamily. As to quaternary structure, heterodimer of LeuC and LeuD. It depends on [4Fe-4S] cluster as a cofactor.

The enzyme catalyses (2R,3S)-3-isopropylmalate = (2S)-2-isopropylmalate. It functions in the pathway amino-acid biosynthesis; L-leucine biosynthesis; L-leucine from 3-methyl-2-oxobutanoate: step 2/4. In terms of biological role, catalyzes the isomerization between 2-isopropylmalate and 3-isopropylmalate, via the formation of 2-isopropylmaleate. The chain is 3-isopropylmalate dehydratase large subunit from Blochmanniella pennsylvanica (strain BPEN).